Here is a 63-residue protein sequence, read N- to C-terminus: Large ribosomal subunit protein uL29 (63 aa).

It belongs to the universal ribosomal protein uL29 family.

This chain is Large ribosomal subunit protein uL29, found in Shigella flexneri.